The primary structure comprises 184 residues: UPF0149 protein Avin_47340 (184 aa).

This sequence belongs to the UPF0149 family.

The polypeptide is UPF0149 protein Avin_47340 (Azotobacter vinelandii (strain DJ / ATCC BAA-1303)).